A 35-amino-acid chain; its full sequence is Beta-amanitin proprotein (35 aa).

The propeptide occupies 1–10; sequence MSDINATRLP. Residues 11-18 constitute a cross-link (cyclopeptide (Ile-Pro)); sequence IWGIGCDP. The segment at residues 12–16 is a cross-link (2'-cysteinyl-6'-hydroxytryptophan sulfoxide (Trp-Cys)); that stretch reads WGIGC. A propeptide spanning residues 19 to 35 is cleaved from the precursor; the sequence is CVGDDVTALLTRGEALC.

The protein belongs to the MSDIN fungal toxin family. Processed by the macrocyclase-peptidase enzyme POPB to yield a toxic cyclic octapeptide. POPB first removes 10 residues from the N-terminus. Conformational trapping of the remaining peptide forces the enzyme to release this intermediate rather than proceed to macrocyclization. The enzyme rebinds the remaining peptide in a different conformation and catalyzes macrocyclization of the N-terminal 8 residues. In terms of tissue distribution, expressed in basidiocarps.

Toxin belonging to the bicyclic octapeptides amatoxins that acts by binding non-competitively to RNA polymerase II and greatly slowing the elongation of transcripts from target promoters. This chain is Beta-amanitin proprotein, found in Amanita exitialis (Guangzhou destroying angel).